The primary structure comprises 818 residues: Serine/threonine-protein phosphatase 4 regulatory subunit 3 (818 aa).

The 100-residue stretch at 1–100 (MTDTRRRVKV…DEIWEKICQV (100 aa)) folds into the WH1 domain. The tract at residues 718 to 818 (LAKSSFSGRQ…PPSKKSRLSS (101 aa)) is disordered. Residues 721-730 (SSFSGRQNPS) are compositionally biased toward polar residues. Over residues 736-756 (SGSTKTSLSSPPPSASLSPGS) the composition is skewed to low complexity. Positions 788-804 (YPDDDEEEEDDDDEESK) are enriched in acidic residues.

The protein belongs to the SMEK family. Serine/threonine-protein phosphatase 4 (PP4) occurs in different assemblies of the catalytic and one or more regulatory subunits.

In terms of biological role, regulatory subunit of serine/threonine-protein phosphatase 4. The chain is Serine/threonine-protein phosphatase 4 regulatory subunit 3 (smek1) from Tetraodon nigroviridis (Spotted green pufferfish).